The chain runs to 431 residues: Protein translocase subunit SecY (431 aa).

Topologically, residues Met1–Lys17 are cytoplasmic. Residues Ile18–Tyr38 traverse the membrane as a helical segment. Residues Val39–Gln66 lie on the Extracellular side of the membrane. The chain crosses the membrane as a helical span at residues Phe67–Leu87. At Gln88–Tyr115 the chain is on the cytoplasmic side. The chain crosses the membrane as a helical span at residues Phe116–Ala136. Residues Asn137 to Gly145 are Extracellular-facing. A helical transmembrane segment spans residues Val146 to Leu166. Residues Gly167–Asn177 lie on the Cytoplasmic side of the membrane. Residues Gly178–Ile198 form a helical membrane-spanning segment. The Extracellular segment spans residues Tyr199–His213. A helical transmembrane segment spans residues Ile214–Ile234. Residues Gln235–His261 lie on the Cytoplasmic side of the membrane. Residues Leu262–Ile282 form a helical membrane-spanning segment. The Extracellular segment spans residues Thr283–His308. A helical membrane pass occupies residues Pro309 to Val329. Residues Gln330–Thr368 are Cytoplasmic-facing. The next 2 helical transmembrane spans lie at Phe369–Ala389 and Gly390–Leu410. Residues Glu411 to Asn431 lie on the Cytoplasmic side of the membrane.

This sequence belongs to the SecY/SEC61-alpha family. As to quaternary structure, component of the Sec protein translocase complex. Heterotrimer consisting of SecY, SecE and SecG subunits. The heterotrimers can form oligomers, although 1 heterotrimer is thought to be able to translocate proteins. Interacts with the ribosome. Interacts with SecDF, and other proteins may be involved. Interacts with SecA. Interacts with FloT.

It localises to the cell membrane. The protein resides in the membrane raft. Functionally, the central subunit of the protein translocation channel SecYEG. Consists of two halves formed by TMs 1-5 and 6-10. These two domains form a lateral gate at the front which open onto the bilayer between TMs 2 and 7, and are clamped together by SecE at the back. The channel is closed by both a pore ring composed of hydrophobic SecY resides and a short helix (helix 2A) on the extracellular side of the membrane which forms a plug. The plug probably moves laterally to allow the channel to open. The ring and the pore may move independently. The polypeptide is Protein translocase subunit SecY (Bacillus subtilis (strain 168)).